The chain runs to 474 residues: MGVVLSPHPAPSRREPLAPLAPGTRPGWSPAVSGSSRSALRPSTAGPGPGPGTGWGGTAASGRWVPAPAVHCAAPRAAAGHQQHHGPPLCSPDGAPRRFKRRPGSPAPAAQTGETSLREQPHGGPPAVPFVVPPTLQGRDWVPLHSGEWADAPWDPCPASELLPHTSSGGLGDACMVGAINPELYKFPEDKSETDFPDGCLGRLWFSVEYEQEAERLLVGLIKAQHLQAPSETCSPLVKLYLLPDERRFLQSKTKRKTSNPQFDEHFIFQVSSKTITQRVLKFSVYHVDRQRKHQLLGQVLFPLKNETLVGDCRRVIWRDLEAESLEPPSEFGDLQFCLSYNDYLSRLTVVVLRAKGLRLQEDRGIVSVFVKVSLMNHNKFVKCKKTSAVLGSINPVYNETFSFKADATELDTASLSLTVVQNMEGDKSQQLGRVVVGPYMYTRGRELEHWDEMLSKPKELVKRWHALCRTTEP.

2 disordered regions span residues 1–62 (MGVV…AASG) and 75–128 (PRAA…PPAV). Low complexity predominate over residues 75-88 (PRAAAGHQQHHGPP). C2 domains are found at residues 200–317 (CLGR…RRVI) and 331–452 (EFGD…EHWD).

This sequence belongs to the synaptotagmin family.

The protein is Synaptotagmin-15B of Homo sapiens (Human).